The sequence spans 1825 residues: Tail fiber protein (1825 aa).

Coiled coils occupy residues 393–466 (VDMS…NSLE), 681–701 (DGVQ…SQKV), 843–891 (KGDQ…NMLA), and 975–998 (DVAK…LQNI).

The protein localises to the virion. In terms of biological role, structural protein, a component of a tail fiber. This is Tail fiber protein from Enterococcus faecalis (Streptococcus faecalis).